The following is a 1407-amino-acid chain: Adenylate cyclase, aggregation specific (1407 aa).

The Cytoplasmic segment spans residues Met-1–Ser-219. Residues Asn-28–Leu-131 form a disordered region. Residues Leu-51–Asn-63 are compositionally biased toward polar residues. The span at Asn-64 to His-75 shows a compositional bias: gly residues. Low complexity-rich tracts occupy residues His-80–His-90 and Pro-98–Ser-115. A run of 6 helical transmembrane segments spans residues Gln-220–Thr-240, Ile-244–Leu-264, Leu-276–Tyr-296, Ile-304–Ile-324, Trp-325–Ser-345, and Ile-353–Leu-373. Residues Glu-374–Glu-962 are Cytoplasmic-facing. A Guanylate cyclase 1 domain is found at Ser-438–Glu-661. Mg(2+)-binding residues include Asp-443, Ile-444, and Asp-488. Disordered stretches follow at residues Ala-502 to Glu-590, Lys-751 to Glu-799, and Asn-828 to Phe-876. Composition is skewed to low complexity over residues Gln-505 to Ile-526, Asn-535 to Gly-581, and Ser-752 to Ser-795. Residues Asn-828–Val-846 are compositionally biased toward polar residues. A compositionally biased stretch (low complexity) spans Asn-847–Asn-871. The next 5 membrane-spanning stretches (helical) occupy residues Thr-963–Leu-979, Ser-992–Thr-1012, Pro-1018–Leu-1038, Leu-1071–Ile-1091, and Ile-1105–Met-1125. The region spanning Ser-1189–Gln-1311 is the Guanylate cyclase 2 domain. The chain crosses the membrane as a helical span at residues Ala-1378 to Phe-1398. The Cytoplasmic portion of the chain corresponds to Thr-1399–Ser-1407.

Belongs to the adenylyl cyclase class-4/guanylyl cyclase family. The cofactor is Mg(2+). Expressed throughout the structure in the tipped mound and finger. Expressed primarily in the prestalk region of the slug. In the early culminant expression is increased in the posterior prespore and anterior-most regions and expands into the developing stalk. In the mid and late culminant it is expressed throughout the stalk.

Its subcellular location is the membrane. The protein resides in the cell projection. It localises to the uropodium. The enzyme catalyses ATP = 3',5'-cyclic AMP + diphosphate. Its activity is regulated as follows. Regulated by cyclic AMP receptor 1 through a guanine nucleotide binding protein and protein CRAC. Both positively and negatively regulated by extracellular cAMP; this regulation is part of the mechanism that establishes the oscillatory cAMP waves during aggregation. In terms of biological role, coordinates cell aggregation by synthesizing the cAMP that influences differentiation and morphogenesis of cells within a developing multicellular structure. The polypeptide is Adenylate cyclase, aggregation specific (acaA) (Dictyostelium discoideum (Social amoeba)).